Consider the following 164-residue polypeptide: HTH-type transcriptional regulator PapX (164 aa).

An HTH marR-type domain is found at 25-159 (EHLLMQLCIR…FEVISKKLLA (135 aa)).

The protein localises to the cytoplasm. The chain is HTH-type transcriptional regulator PapX (papX) from Escherichia coli.